Here is a 465-residue protein sequence, read N- to C-terminus: MAKQAPDVGDYKYGFHDEDVSIFRSERGLTENIVTEISKMKEEPQWMLDFRLKALKLFYKMPMPQWGGDLSELDFDDITYYVKPSEHTERSWDEVPEEIKRTFDKLGIPEAEQKYLAGVSAQYESEVVYHNMEKELEEKGIIFKDTDSALRENEELFREYFASVVPAADNKFAALNSAVWSGGSFIYVPKNVKLDTPLQAYFRINSENMGQFERTLIIADEGASVNYVEGCTAPVYSTSSLHSAVVEIIVHKDAHVRYTTIQNWANNVYNLVTKRTFVHENGNMEWVDGNLGSKLTMKYPNCVLLGEGAKGSTLSIAFAGKGQVQDAGAKMIHKAPNTSSTIVSKSISKNGGKVIYRGIVHFGRKAKGARSNIECDTLILDNESTSDTIPYNEVFNDNISLEHEAKVSKVSEEQLFYLMSRGISEEEATEMIVMGFIEPFTKELPMEYAVEMNRLIKFEMEGSIG.

This sequence belongs to the iron-sulfur cluster assembly SufBD family.

The sequence is that of Iron-sulfur cluster assembly SufBD family protein SERP0500 from Staphylococcus epidermidis (strain ATCC 35984 / DSM 28319 / BCRC 17069 / CCUG 31568 / BM 3577 / RP62A).